A 328-amino-acid chain; its full sequence is N-acetyl-gamma-glutamyl-phosphate reductase (328 aa).

The active site involves C143.

This sequence belongs to the NAGSA dehydrogenase family. Type 1 subfamily.

It is found in the cytoplasm. It carries out the reaction N-acetyl-L-glutamate 5-semialdehyde + phosphate + NADP(+) = N-acetyl-L-glutamyl 5-phosphate + NADPH + H(+). It functions in the pathway amino-acid biosynthesis; L-arginine biosynthesis; N(2)-acetyl-L-ornithine from L-glutamate: step 3/4. Functionally, catalyzes the NADPH-dependent reduction of N-acetyl-5-glutamyl phosphate to yield N-acetyl-L-glutamate 5-semialdehyde. The chain is N-acetyl-gamma-glutamyl-phosphate reductase from Methanoregula boonei (strain DSM 21154 / JCM 14090 / 6A8).